Reading from the N-terminus, the 1170-residue chain is Glucose transport transcription regulator RGT1 (1170 aa).

Residues 1 to 22 show a composition bias toward polar residues; the sequence is MNELNTVSTNSSDSTKNGGTSN. The interval 1–46 is disordered; sequence MNELNTVSTNSSDSTKNGGTSNSPDDMDSAAAASHAIKKRTKASRA. The segment at residues 47-76 is a DNA-binding region (zn(2)-C6 fungal-type); the sequence is CDQCRKKKIKCDYKDEKGVCSNCQRNGDRC. The tract at residues 77-149 is disordered; that stretch reads SFDRVPLKRG…PSTPSRSNSV (73 aa). Basic and acidic residues predominate over residues 99–108; that stretch reads RTNEIQDHNN. The span at 113 to 138 shows a compositional bias: low complexity; it reads NTFDNSNNTLNNNTGNSGDNGINSNT. Positions 139 to 149 are enriched in polar residues; the sequence is VPSTPSRSNSV. Phosphoserine occurs at positions 202, 205, 208, and 229. Disordered stretches follow at residues 226 to 254, 269 to 288, 293 to 323, 384 to 506, and 944 to 977; these read VQQS…SASG, APTD…IPSL, SNSL…LQQG, AQQT…HPMT, and NYRP…SAAP. Over residues 239 to 250 the composition is skewed to low complexity; the sequence is SGNANGSVTGSG. Basic and acidic residues predominate over residues 271-280; the sequence is TDDHNGEQTR. Phosphoserine occurs at positions 283 and 284. Low complexity-rich tracts occupy residues 293-302, 309-323, and 385-397; these read SNSLLLGGQP, QQSQ…LQQG, and QQTQ…QVPQ. Ser410 and Ser414 each carry phosphoserine. Over residues 411–422 the composition is skewed to polar residues; that stretch reads APVSVTLSTDRL. Over residues 424-444 the composition is skewed to low complexity; it reads GNENNNGEINNNNGSNNSGSS. Over residues 445-457 the composition is skewed to polar residues; it reads KDTSQHSQESVTT. Over residues 473–488 the composition is skewed to basic residues; the sequence is STKKRRKSYVSKKTKP. Residues 493-506 show a composition bias toward polar residues; it reads SISITSKDSAHPMT. Position 1130 is a phosphoserine (Ser1130).

This sequence belongs to the EDS1/RGT1 family. Glucose-induced phosphorylation regulates the DNA-binding activity. Hyperphosphorylation in cells growing on high levels of glucose does prevents DNA-binding and dephosphorylation restores DNA-binding ability.

It localises to the nucleus. The protein localises to the cytoplasm. Functionally, glucose-responsive transcription factor that regulates expression of several glucose transporter (HXT) genes in response to glucose. In the absence of glucose, it functions as a transcriptional repressor, whereas high concentrations of glucose cause it to function as a transcriptional activator. In cells growing on low levels of glucose, has a neutral role, neither repressing nor activating transcription. Binds the consensus binding site sequence 5'-CGGANNA-3', of which multiple copies are present in all HXT promoters regulated by RGT1. This chain is Glucose transport transcription regulator RGT1 (RGT1), found in Saccharomyces cerevisiae (strain RM11-1a) (Baker's yeast).